The sequence spans 125 residues: uncharacterized protein (125 aa).

Disordered regions lie at residues 1 to 27 and 76 to 125; these read MNKT…GSSS and NKNN…RFKK. Positions 18–27 are enriched in low complexity; that stretch reads GMNSTTGSSS.

This is an uncharacterized protein from Dictyostelium discoideum (Social amoeba).